A 392-amino-acid chain; its full sequence is Fasciculation and elongation protein zeta-1 (392 aa).

A disordered region spans residues 1-36; sequence MEAPLVSLDEEFEDIRPSCTEEPEEKPQCLYGTSPH. Residue serine 58 is modified to Phosphoserine. Residues 175–196 are disordered; that stretch reads MQNSPDPEEEEEVLEEEDGGEI. The span at 180 to 194 shows a compositional bias: acidic residues; that stretch reads DPEEEEEVLEEEDGG. The stretch at 230 to 298 forms a coiled coil; it reads SELTELLDRV…KKRRKEKGLS (69 aa). Serine 298 and serine 316 each carry phosphoserine.

The protein belongs to the zygin family. In terms of assembly, homodimer. Interacts with the NH2-terminal variable region (V1) of PKC zeta and weakly with that of PKC epsilon. Interacts with UBE4B and SAP30L. Interacts with SCOC and ULK1; SCOC interferes with ULK1-binding to FEZ1. Directly interacts with SCOC and UVRAG. Stabilizes the interaction between SCOC and UVRAG during amino acid starvation. Post-translationally, phosphorylated by protein kinase C zeta; which enhances interaction with UBE4B and polyubiquitination. Polyubiquitinated in a UBE4B-dependent manner; which does not lead to proteasomal degradation and may be important for neurogenic activity. Polyubiquitin linkage seems to be mainly through Lys-26.

Its subcellular location is the cytoplasm. The protein localises to the cytoskeleton. It is found in the microtubule organizing center. The protein resides in the centrosome. It localises to the cell membrane. Functionally, may be involved in axonal outgrowth as component of the network of molecules that regulate cellular morphology and axon guidance machinery. May participate in the transport of mitochondria and other cargos along microtubules. This chain is Fasciculation and elongation protein zeta-1 (Fez1), found in Mus musculus (Mouse).